The following is a 460-amino-acid chain: Fumarate hydratase class II (460 aa).

Substrate contacts are provided by residues 95-97, 126-129, 136-138, and T184; these read SGT, HPND, and SSN. The active-site Proton donor/acceptor is H185. The active site involves S315. Residues S316 and 321-323 each bind substrate; that span reads KIN.

It belongs to the class-II fumarase/aspartase family. Fumarase subfamily. As to quaternary structure, homotetramer.

Its subcellular location is the cytoplasm. The enzyme catalyses (S)-malate = fumarate + H2O. Its pathway is carbohydrate metabolism; tricarboxylic acid cycle; (S)-malate from fumarate: step 1/1. Involved in the TCA cycle. Catalyzes the stereospecific interconversion of fumarate to L-malate. The sequence is that of Fumarate hydratase class II from Chlamydia caviae (strain ATCC VR-813 / DSM 19441 / 03DC25 / GPIC) (Chlamydophila caviae).